The sequence spans 350 residues: fMet-Leu-Phe receptor (350 aa).

Over 1–27 the chain is Extracellular; sequence METNSSLPTNISGGTPAVSAGYLFLDI. 2 N-linked (GlcNAc...) asparagine glycosylation sites follow: N4 and N10. Residues 28–50 form a helical membrane-spanning segment; the sequence is ITYLVFAVTFVLGVLGNGLVIWV. The Cytoplasmic portion of the chain corresponds to 51–61; it reads AGFRMTHTVTT. A helical transmembrane segment spans residues 62 to 83; it reads ISYLNLAVADFCFTSTLPFFMV. Over 84 to 100 the chain is Extracellular; the sequence is RKAMGGHWPFGWFLCKF. C98 and C176 form a disulfide bridge. A helical membrane pass occupies residues 101–121; sequence VFTIVDINLFGSVFLIALIAL. Residues 122-140 are Cytoplasmic-facing; sequence DRCVCVLHPVWTQNHRTVS. Residues 141–162 traverse the membrane as a helical segment; that stretch reads LAKKVIIGPWVMALLLTLPVII. The Extracellular segment spans residues 163–205; that stretch reads RVTTVPGKTGTVACTFNFSPWTNDPKERINVAVAMLTVRGIIR. A helical membrane pass occupies residues 206–226; it reads FIIGFSAPMSIVAVSYGLIAT. Residues 227 to 242 are Cytoplasmic-facing; sequence KIHKQGLIKSSRPLRV. Residues 243–266 form a helical membrane-spanning segment; it reads LSFVAAAFFLCWSPYQVVALIATV. The Extracellular portion of the chain corresponds to 267 to 285; the sequence is RIRELLQGMYKEIGIAVDV. A helical transmembrane segment spans residues 286–305; the sequence is TSALAFFNSCLNPMLYVFMG. Topologically, residues 306–350 are cytoplasmic; the sequence is QDFRERLIHALPASLERALTEDSTQTSDTATNSTLPSAEVELQAK. The interval 325–350 is disordered; the sequence is TEDSTQTSDTATNSTLPSAEVELQAK. The segment covering 326–341 has biased composition (polar residues); it reads EDSTQTSDTATNSTLP. The residue at position 328 (S328) is a Phosphoserine. Phosphothreonine is present on residues T329 and T331. Phosphoserine is present on S332. Phosphothreonine is present on residues T334 and T336. S338 is subject to Phosphoserine. A Phosphothreonine modification is found at T339.

This sequence belongs to the G-protein coupled receptor 1 family. As to quaternary structure, interacts with S.aureus chemotaxis inhibitory protein (CHIPS); the interaction blocks the receptor and may thus inhibit the immune response. In terms of processing, phosphorylated; which is necessary for desensitization. Neutrophils.

Its subcellular location is the cell membrane. Functionally, high affinity receptor for N-formyl-methionyl peptides (fMLP), which are powerful neutrophil chemotactic factors. Binding of fMLP to the receptor stimulates intracellular calcium mobilization and superoxide anion release. This response is mediated via a G-protein that activates a phosphatidylinositol-calcium second messenger system. Receptor for TAFA4, mediates its effects on chemoattracting macrophages, promoting phagocytosis and increasing ROS release. Receptor for cathepsin CTSG, leading to increased phagocyte chemotaxis. This is fMet-Leu-Phe receptor (FPR1) from Homo sapiens (Human).